The following is a 469-amino-acid chain: ATP synthase subunit beta (469 aa).

155–162 serves as a coordination point for ATP; it reads GGAGVGKT.

The protein belongs to the ATPase alpha/beta chains family. As to quaternary structure, F-type ATPases have 2 components, CF(1) - the catalytic core - and CF(0) - the membrane proton channel. CF(1) has five subunits: alpha(3), beta(3), gamma(1), delta(1), epsilon(1). CF(0) has three main subunits: a(1), b(2) and c(9-12). The alpha and beta chains form an alternating ring which encloses part of the gamma chain. CF(1) is attached to CF(0) by a central stalk formed by the gamma and epsilon chains, while a peripheral stalk is formed by the delta and b chains.

Its subcellular location is the cell inner membrane. The enzyme catalyses ATP + H2O + 4 H(+)(in) = ADP + phosphate + 5 H(+)(out). Produces ATP from ADP in the presence of a proton gradient across the membrane. The catalytic sites are hosted primarily by the beta subunits. The polypeptide is ATP synthase subunit beta (Helicobacter pylori (strain P12)).